The primary structure comprises 145 residues: Synaptojanin-2-binding protein (145 aa).

The Cytoplasmic portion of the chain corresponds to 1–117 (MNGRVDYLVT…VHRGEGEPSG (117 aa)). A PDZ domain is found at 13–100 (EINLTRGPSG…AVSLRVQHRL (88 aa)). Residues 118-138 (VPVAMVLLPVFALTMVAVWAF) form a helical; Anchor for type IV membrane protein membrane-spanning segment. Topologically, residues 139 to 145 (VRYRKQL) are mitochondrial intermembrane.

In terms of assembly, binds (via the PDZ domain) to isoform 2A of SYNJ2 (via the unique motif in the C-terminus). Interacts (via C-terminus) with RALBP1. Interacts (via PDZ domain) with ACVR2A (via C-terminus) and ACVR2B (via C-terminus). Forms a ternary complex with ACVR2A and RALBP1. Interacts with MAPK12. Interacts with DLL1; enhances DLL1 protein stability, and promotes notch signaling in endothelial cells. As to expression, isoform 1 and isoform 2 are widely expressed, notably in brain, heart, lung, liver, kidney, skeletal muscle, ovary and testis. Isoform 3 is detected only in heart, spleen and testis.

Its subcellular location is the mitochondrion outer membrane. It localises to the cytoplasm. It is found in the perinuclear region. Isoform 1 regulates endocytosis of activin type 2 receptor kinases through the Ral/RALBP1-dependent pathway and may be involved in suppression of activin-induced signal transduction. Isoform 2 and isoform 3 show a stimulatory affect on activin-induced signal transduction and enhance activin type 2 expression at the cell surface. This is Synaptojanin-2-binding protein from Mus musculus (Mouse).